We begin with the raw amino-acid sequence, 49 residues long: Light-harvesting protein B800/850/890 alpha-3 chain (49 aa).

Topologically, residues 1-14 (MNQARIWLVVKPSV) are cytoplasmic. A helical transmembrane segment spans residues 15–35 (GLPLLLGVVLLIALLVHGAIL). Histidine 31 serves as a coordination point for a bacteriochlorophyll. The Periplasmic segment spans residues 36–49 (TNTSWYPTYFEGNW).

Belongs to the antenna complex alpha subunit family. As to quaternary structure, the core complex is formed by different alpha and beta chains, binding bacteriochlorophyll molecules, and arranged most probably in tetrameric structures disposed around the reaction center. The non-pigmented gamma chains may constitute additional components.

The protein localises to the cell inner membrane. Antenna complexes are light-harvesting systems, which transfer the excitation energy to the reaction centers. The polypeptide is Light-harvesting protein B800/850/890 alpha-3 chain (Halorhodospira halophila (strain DSM 244 / SL1) (Ectothiorhodospira halophila (strain DSM 244 / SL1))).